A 395-amino-acid chain; its full sequence is Transcription termination/antitermination protein NusA (395 aa).

In terms of domain architecture, S1 motif spans 137–201; it reads NSVLMGQVIL…TKKGLLLELS (65 aa). KH domains lie at 243–291 and 331–378; these read SHNS…TLAL and KVRL…NENE.

Belongs to the NusA family. Monomer. Binds directly to the core enzyme of the DNA-dependent RNA polymerase and to nascent RNA.

It localises to the cytoplasm. Its function is as follows. Participates in both transcription termination and antitermination. This Helicobacter pylori (strain J99 / ATCC 700824) (Campylobacter pylori J99) protein is Transcription termination/antitermination protein NusA.